Consider the following 59-residue polypeptide: UPF0291 protein CPR_1073 (59 aa).

The disordered stretch occupies residues 1–30; sequence MNIDELTKRINELHKKHKEEGLSEDEHKER.

This sequence belongs to the UPF0291 family.

The protein localises to the cytoplasm. In Clostridium perfringens (strain SM101 / Type A), this protein is UPF0291 protein CPR_1073.